Here is a 645-residue protein sequence, read N- to C-terminus: Threonine--tRNA ligase (645 aa).

Residues Asp3 to Thr64 enclose the TGS domain. The catalytic stretch occupies residues Asp247 to Pro544. Zn(2+)-binding residues include Cys340, His391, and His521.

Belongs to the class-II aminoacyl-tRNA synthetase family. Homodimer. Zn(2+) is required as a cofactor.

Its subcellular location is the cytoplasm. It catalyses the reaction tRNA(Thr) + L-threonine + ATP = L-threonyl-tRNA(Thr) + AMP + diphosphate + H(+). In terms of biological role, catalyzes the attachment of threonine to tRNA(Thr) in a two-step reaction: L-threonine is first activated by ATP to form Thr-AMP and then transferred to the acceptor end of tRNA(Thr). Also edits incorrectly charged L-seryl-tRNA(Thr). The chain is Threonine--tRNA ligase from Halalkalibacterium halodurans (strain ATCC BAA-125 / DSM 18197 / FERM 7344 / JCM 9153 / C-125) (Bacillus halodurans).